We begin with the raw amino-acid sequence, 381 residues long: N-acetyl-alpha-D-glucosaminyl L-malate synthase (381 aa).

(S)-malate-binding residues include S16, Y94, and T122. N206, Q262, and E290 together coordinate UDP.

The protein belongs to the glycosyltransferase group 1 family. Glycosyltransferase 4 subfamily. As to quaternary structure, dimer of tetramers.

The enzyme catalyses (S)-malate + UDP-N-acetyl-alpha-D-glucosamine = (S)-malyl N-acetyl-alpha-D-glucosaminide + UDP + H(+). Its function is as follows. Involved in bacillithiol (BSH) biosynthesis. Catalyzes the first step of the pathway, the formation of N-acetylglucosaminylmalate (GlcNAc-Mal) from UDP-N-acetylglucosamine (UDP-GlcNAc) and L-malate. This Bacillus anthracis protein is N-acetyl-alpha-D-glucosaminyl L-malate synthase.